Reading from the N-terminus, the 626-residue chain is UPF0313 protein MM_1287 (626 aa).

The tract at residues 206 to 227 is disordered; it reads GKGKEKAGEQDESENATEEVAK. Residues 320–589 form the Radical SAM core domain; that stretch reads ALEMVKFSLT…AMQRALMHYR (270 aa). 3 residues coordinate [4Fe-4S] cluster: cysteine 334, cysteine 338, and cysteine 341.

Belongs to the UPF0313 family. The cofactor is [4Fe-4S] cluster.

The sequence is that of UPF0313 protein MM_1287 from Methanosarcina mazei (strain ATCC BAA-159 / DSM 3647 / Goe1 / Go1 / JCM 11833 / OCM 88) (Methanosarcina frisia).